A 122-amino-acid chain; its full sequence is MIQQQTMLDVADNSGAKKVQCIKVLGGSRRRYASIGDVIVVSVKEAIPQAKVKKGEVARAVIVRTSREVKRPDGSYIRFDGNSAVLINKDLEPIGTRIFGPVARELRARKFMKIISLAPEVL.

Belongs to the universal ribosomal protein uL14 family. In terms of assembly, part of the 50S ribosomal subunit. Forms a cluster with proteins L3 and L19. In the 70S ribosome, L14 and L19 interact and together make contacts with the 16S rRNA in bridges B5 and B8.

Functionally, binds to 23S rRNA. Forms part of two intersubunit bridges in the 70S ribosome. The polypeptide is Large ribosomal subunit protein uL14 (Anaeromyxobacter sp. (strain Fw109-5)).